A 2381-amino-acid polypeptide reads, in one-letter code: Myb-like protein U (2381 aa).

4 disordered regions span residues 1–85, 148–167, 178–492, and 641–696; these read MKTK…TSNN, SSSGTVNNSNNNNNNDGGIS, PTIP…NNNN, and NINN…GDEM. 2 stretches are compositionally biased toward low complexity: residues 30–41 and 64–79; these read SKSSSKVSQSSS and TIPAPLSTTITPPTLT. Composition is skewed to low complexity over residues 192 to 204, 225 to 261, and 291 to 315; these read NLSSSTSSTNILS, ENVNNINSGNVKNSKNNSGSSISSSISSSSSSGSSSS, and SNKSNSKKSSSNKSKSPSNKNNNKK. Positions 331-343 are enriched in acidic residues; it reads SEYDSSDSSDMDL. Residues 363-405 show a composition bias toward low complexity; it reads TTKPNNSNSNNNNNNNSINSTIPASNNINSANNSKTTNKNITS. A compositionally biased stretch (polar residues) spans 421–430; it reads SETPILTSVK. 2 stretches are compositionally biased toward low complexity: residues 435–492 and 641–692; these read QQIP…NNNN and NINN…NNNN. The region spanning 856–899 is the Myb-like domain; the sequence is WHEEEKLLFRELFCAYGRDWQMVSTLMCGTKSPTQIKNFYYDVR. Disordered stretches follow at residues 932-1024, 1068-1093, 1145-1207, 1295-1339, 1422-1474, 1597-1647, 1667-1849, 1961-1985, 2055-2106, and 2122-2280; these read KPEQ…ETPP, INQSSNSSPVNNNNSNNNNNNNNINP, TSST…SNQE, STTT…PPID, PYYP…LSTP, PPAT…TTIV, PIVK…PPPV, TTVPGTTTTTNPNGSIPPKPSNGLA, TSTV…NGLT, and LSGI…NKND. Positions 936-953 are enriched in low complexity; the sequence is NVNSNNNNNGGGNSLKDG. Basic residues predominate over residues 982 to 995; that stretch reads VKKKSRTASKRSFR. The segment covering 1000–1013 has biased composition (polar residues); it reads ANETNRTPKNQPKP. 4 stretches are compositionally biased toward low complexity: residues 1069–1092, 1145–1186, 1195–1205, and 1306–1325; these read NQSSNSSPVNNNNSNNNNNNNNIN, TSST…TGSA, VNNNNNNNLSN, and TTTPTQQQFQQLQPTQQLQQ. Over residues 1326–1337 the composition is skewed to pro residues; the sequence is LPPPPPPPPKPP. The segment covering 1427–1474 has biased composition (low complexity); it reads PSSTTTNSATSTPTSTPTSTPSTSASTLTPTSTPTSTPVPAPTSLSTP. The span at 1597 to 1606 shows a compositional bias: pro residues; sequence PPATITPILP. A compositionally biased stretch (low complexity) spans 1618–1637; the sequence is SSSSSSSSSSSSSSSSSSSS. 2 stretches are compositionally biased toward polar residues: residues 1638–1647 and 1671–1701; these read TTKNNSTTIV and QESNSPSKTLPPSNSPSKTLPLSNSPSKTLL. Low complexity-rich tracts occupy residues 1702 to 1735 and 1743 to 1809; these read PSNSSIPNKSTPSPIPKPTTSSTTYPVTTSNPSS and TSNK…TLKP. A compositionally biased stretch (polar residues) spans 1829–1844; that stretch reads APTNSTNQNTIPNATT. Low complexity-rich tracts occupy residues 1961 to 1970 and 2065 to 2097; these read TTVPGTTTTT and NNMTTTTTSSTSTTMTTPTSTNTTTNGTPQQST. The segment covering 2129-2138 has biased composition (polar residues); the sequence is NTLSGKSPTP. Residues 2154-2209 are compositionally biased toward low complexity; the sequence is PSLSSSSANPISITNNTTSLSQQSNTTNTMPSTVSLSSGSTSINSNSSNSKSLRSP. A compositionally biased stretch (basic and acidic residues) spans 2210 to 2278; sequence KSSDNDGKES…NNNDKFDSNK (69 aa).

In Dictyostelium discoideum (Social amoeba), this protein is Myb-like protein U (mybU).